Here is a 666-residue protein sequence, read N- to C-terminus: tRNA 5-methylaminomethyl-2-thiouridine biosynthesis bifunctional protein MnmC (666 aa).

Residues 1 to 245 are tRNA (mnm(5)s(2)U34)-methyltransferase; sequence MKQYAIQPAT…KREMLCGVME (245 aa). The FAD-dependent cmnm(5)s(2)U34 oxidoreductase stretch occupies residues 270–666; sequence IGGGIASALL…RKLLKGKAVK (397 aa).

In the N-terminal section; belongs to the methyltransferase superfamily. tRNA (mnm(5)s(2)U34)-methyltransferase family. The protein in the C-terminal section; belongs to the DAO family. It depends on FAD as a cofactor.

The protein resides in the cytoplasm. The enzyme catalyses 5-aminomethyl-2-thiouridine(34) in tRNA + S-adenosyl-L-methionine = 5-methylaminomethyl-2-thiouridine(34) in tRNA + S-adenosyl-L-homocysteine + H(+). Functionally, catalyzes the last two steps in the biosynthesis of 5-methylaminomethyl-2-thiouridine (mnm(5)s(2)U) at the wobble position (U34) in tRNA. Catalyzes the FAD-dependent demodification of cmnm(5)s(2)U34 to nm(5)s(2)U34, followed by the transfer of a methyl group from S-adenosyl-L-methionine to nm(5)s(2)U34, to form mnm(5)s(2)U34. The sequence is that of tRNA 5-methylaminomethyl-2-thiouridine biosynthesis bifunctional protein MnmC from Salmonella paratyphi A (strain ATCC 9150 / SARB42).